The following is a 68-amino-acid chain: Small cysteine-rich protein 2 (68 aa).

Positions 1 to 24 (MAVKFHLCLLLIILVGMGAHVAFA) are cleaved as a signal peptide.

The protein belongs to the Cnidaria small cysteine-rich protein (SCRiP) family. gamma subfamily. In terms of processing, contains 4 disulfide bonds.

The protein localises to the secreted. The protein resides in the nematocyst. Induces neurotoxic symptoms on zebrafish. Has also been claimed to be implied in calcification, but tests on homolog proteins suggest that proteins of this family have a neurotoxic function and not a calcification function. This is Small cysteine-rich protein 2 from Orbicella faveolata (Mountainous star coral).